The chain runs to 327 residues: GMP reductase (327 aa).

The active-site Thioimidate intermediate is Cys176. 205–228 (IIADGGIRTHGDIAKSIRFGASMV) contributes to the NADP(+) binding site.

This sequence belongs to the IMPDH/GMPR family. GuaC type 2 subfamily.

It carries out the reaction IMP + NH4(+) + NADP(+) = GMP + NADPH + 2 H(+). Functionally, catalyzes the irreversible NADPH-dependent deamination of GMP to IMP. It functions in the conversion of nucleobase, nucleoside and nucleotide derivatives of G to A nucleotides, and in maintaining the intracellular balance of A and G nucleotides. This Streptococcus agalactiae serotype III (strain NEM316) protein is GMP reductase.